We begin with the raw amino-acid sequence, 230 residues long: Osmotin-like protein PR-5x (230 aa).

The signal sequence occupies residues 1 to 25; sequence MYTNMGYLTSSFIFFFLALVTYTYA. Cystine bridges form between Cys-34–Cys-229, Cys-76–Cys-86, Cys-91–Cys-97, Cys-145–Cys-217, Cys-150–Cys-200, Cys-158–Cys-168, Cys-172–Cys-181, and Cys-182–Cys-187.

Belongs to the thaumatin family.

The protein localises to the secreted. Its subcellular location is the vacuole. The enzyme catalyses Endohydrolysis of (1-&gt;3)- or (1-&gt;4)-linkages in beta-D-glucans when the glucose residue whose reducing group is involved in the linkage to be hydrolyzed is itself substituted at C-3.. In terms of biological role, antifungal protein. May bind to beta-glucans and have beta-1,3-D-glucanase activity. The chain is Osmotin-like protein PR-5x from Solanum lycopersicum (Tomato).